Reading from the N-terminus, the 416-residue chain is Glutamyl-tRNA reductase (416 aa).

Substrate contacts are provided by residues 49–52 (TCNR), Ser105, 110–112 (EPQ), and Gln116. Cys50 (nucleophile) is an active-site residue. 185–190 (GAGETI) contributes to the NADP(+) binding site.

This sequence belongs to the glutamyl-tRNA reductase family. In terms of assembly, homodimer.

The enzyme catalyses (S)-4-amino-5-oxopentanoate + tRNA(Glu) + NADP(+) = L-glutamyl-tRNA(Glu) + NADPH + H(+). The protein operates within porphyrin-containing compound metabolism; protoporphyrin-IX biosynthesis; 5-aminolevulinate from L-glutamyl-tRNA(Glu): step 1/2. Catalyzes the NADPH-dependent reduction of glutamyl-tRNA(Glu) to glutamate 1-semialdehyde (GSA). The polypeptide is Glutamyl-tRNA reductase (Shewanella baltica (strain OS185)).